The sequence spans 194 residues: CASP-like protein Ni6 (194 aa).

Residues 1-27 are Cytoplasmic-facing; the sequence is MSSMETEKGAVPTPQAPPVAPTDNKYR. A helical transmembrane segment spans residues 28 to 48; the sequence is VVDVILRVLLLAASIASVVLM. Over 49-75 the chain is Extracellular; the sequence is VTSKQTEIIVSPFGSRPNAAKFQNSPA. Residues 76–96 form a helical membrane-spanning segment; the sequence is FIYLVAALSVAGLYSIITALV. The Cytoplasmic portion of the chain corresponds to 97–109; the sequence is SLSYMRKPIVPPK. Residues 110-130 traverse the membrane as a helical segment; it reads LFWILLIHDVLLLGIVAAATG. Residues 131–161 are Extracellular-facing; sequence TAGGVGYIGLKGNTHVRWGKIRNVYDKFCRH. A helical transmembrane segment spans residues 162 to 182; sequence VGASIIVSLFAAAVLVLLVFV. The Cytoplasmic portion of the chain corresponds to 183–194; it reads NANSLYRRIPKY.

Belongs to the Casparian strip membrane proteins (CASP) family. Homodimer and heterodimers.

It is found in the cell membrane. In Beta vulgaris subsp. maritima (Sea beet), this protein is CASP-like protein Ni6 (Ni6).